A 184-amino-acid polypeptide reads, in one-letter code: Photosystem I assembly protein Ycf4 (184 aa).

A run of 2 helical transmembrane segments spans residues Asn-21–Tyr-43 and Gly-63–Ser-85.

Belongs to the Ycf4 family.

The protein resides in the plastid. The protein localises to the chloroplast thylakoid membrane. In terms of biological role, seems to be required for the assembly of the photosystem I complex. The protein is Photosystem I assembly protein Ycf4 of Spinacia oleracea (Spinach).